The sequence spans 536 residues: MVSIRDFTMPKKFVQMLVFNLTLTEVVLSGNVLIWPTDGSHWLNIKIILEELIQRNHNVTVLASSATLFINSNPDSPVNFEVIPVSYKKSNIDSLIEHMIMLWIDHRPTPLTIWAFYKELGKLLDTFFQINIQLCDGVLKNPKLMARLQKGGFDVLVADPVTICGDLVALKLGIPFMYTLRFSPASTVERHCGKIPAPVSYVPAALSELTDQMTFGERIKNTISYSLQDYIFQSYWGEWNSYYSKILGRPTTLCETMGKAEIWLIRTYWDFEFPRPYLPNFEFVGGLHCKPAKPLPKEMEEFIQSSGKNGVVVFSLGSMVKNLTEEKANLIASALAQIPQKVLWRYKGKKPATLGNNTQLFDWIPQNDLLGHPKTKAFITHGGTNGIYEAIYHGVPMVGVPMFADQPDNIAHMKAKGAAVEVNLNTMTSVDLLSALRTVINEPSYKENAMRLSRIHHDQPVKPLDRAVFWIEFVMRHKGAKHLRVAAHDLTWFQYHSLDVIGFLLVCVTTAIFLVIQCCLFSCQKFGKIGKKKKRE.

Over 1-15 (MVSIRDFTMPKKFVQ) the chain is Cytoplasmic. A helical membrane pass occupies residues 16-36 (MLVFNLTLTEVVLSGNVLIWP). The Lumenal segment spans residues 37–500 (TDGSHWLNIK…TWFQYHSLDV (464 aa)). N-linked (GlcNAc...) asparagine glycosylation is found at asparagine 58, asparagine 322, and asparagine 356. The chain crosses the membrane as a helical span at residues 501 to 521 (IGFLLVCVTTAIFLVIQCCLF). Residues 522–536 (SCQKFGKIGKKKKRE) lie on the Cytoplasmic side of the membrane.

This sequence belongs to the UDP-glycosyltransferase family. As to expression, mainly expressed in the nasal mucosa.

The protein localises to the endoplasmic reticulum membrane. The catalysed reaction is glucuronate acceptor + UDP-alpha-D-glucuronate = acceptor beta-D-glucuronoside + UDP + H(+). It carries out the reaction 17alpha-estradiol + UDP-alpha-D-glucuronate = 17alpha-estradiol 3-O-(beta-D-glucuronate) + UDP + H(+). It catalyses the reaction 17beta-estradiol + UDP-alpha-D-glucuronate = 17beta-estradiol 3-O-(beta-D-glucuronate) + UDP + H(+). The enzyme catalyses chenodeoxycholate + UDP-alpha-D-glucuronate = chenodeoxycholoyl-24-O-(beta-D-glucuronate) + UDP. The catalysed reaction is lithocholate + UDP-alpha-D-glucuronate = lithocholoyl-24-O-(beta-D-glucuronate) + UDP. It carries out the reaction deoxycholate + UDP-alpha-D-glucuronate = deoxycholoyl-24-O-(beta-D-glucuronate) + UDP. It catalyses the reaction hyocholate + UDP-alpha-D-glucuronate = hyocholoyl-24-O-(beta-D-glucuronate) + UDP. The enzyme catalyses hyodeoxycholate + UDP-alpha-D-glucuronate = hyodeoxycholate 6-O-(beta-D-glucuronate) + UDP + H(+). Functionally, UDP-glucuronosyltransferase (UGT) that catalyzes phase II biotransformation reactions in which lipophilic substrates are conjugated with glucuronic acid to increase the metabolite's water solubility, thereby facilitating excretion into either the urine or bile. Essential for the elimination and detoxification of drugs, xenobiotics and endogenous compounds. Catalyzes the glucuronidation of endogenous estrogen hormone estradiol. Contributes to bile acid (BA) detoxification by catalyzing the glucuronidation of BA substrates, which are natural detergents for dietary lipids absorption. Shows a potential role in detoxification of toxic waste compounds in the amniotic fluid before birth, and air-born chemical after birth. This is UDP-glucuronosyltransferase 2A2 from Homo sapiens (Human).